An 82-amino-acid polypeptide reads, in one-letter code: ATP synthase subunit c (82 aa).

2 helical membrane passes run 3–23 and 57–77; these read PLVA…ASLG and LAFM…LLFA.

It belongs to the ATPase C chain family. As to quaternary structure, F-type ATPases have 2 components, F(1) - the catalytic core - and F(0) - the membrane proton channel. F(1) has five subunits: alpha(3), beta(3), gamma(1), delta(1), epsilon(1). F(0) has four main subunits: a(1), b(1), b'(1) and c(10-14). The alpha and beta chains form an alternating ring which encloses part of the gamma chain. F(1) is attached to F(0) by a central stalk formed by the gamma and epsilon chains, while a peripheral stalk is formed by the delta, b and b' chains.

The protein localises to the cellular thylakoid membrane. F(1)F(0) ATP synthase produces ATP from ADP in the presence of a proton or sodium gradient. F-type ATPases consist of two structural domains, F(1) containing the extramembraneous catalytic core and F(0) containing the membrane proton channel, linked together by a central stalk and a peripheral stalk. During catalysis, ATP synthesis in the catalytic domain of F(1) is coupled via a rotary mechanism of the central stalk subunits to proton translocation. Functionally, key component of the F(0) channel; it plays a direct role in translocation across the membrane. A homomeric c-ring of between 10-14 subunits forms the central stalk rotor element with the F(1) delta and epsilon subunits. The polypeptide is ATP synthase subunit c (Synechococcus sp. (strain PCC 6716)).